A 219-amino-acid polypeptide reads, in one-letter code: uncharacterized protein (219 aa).

Positions 4–79 constitute an ACT domain; the sequence is GLRIIAENKI…YIIEIEEEES (76 aa).

This is an uncharacterized protein from Archaeoglobus fulgidus (strain ATCC 49558 / DSM 4304 / JCM 9628 / NBRC 100126 / VC-16).